The following is a 129-amino-acid chain: Glycine cleavage system H protein (129 aa).

The region spanning 24-106 (LLKIGVSEFA…IGNGWLLIIK (83 aa)) is the Lipoyl-binding domain. K65 bears the N6-lipoyllysine mark.

This sequence belongs to the GcvH family. As to quaternary structure, the glycine cleavage system is composed of four proteins: P, T, L and H. It depends on (R)-lipoate as a cofactor.

Functionally, the glycine cleavage system catalyzes the degradation of glycine. The H protein shuttles the methylamine group of glycine from the P protein to the T protein. The sequence is that of Glycine cleavage system H protein from Prochlorococcus marinus (strain MIT 9515).